The chain runs to 440 residues: MSTPTPKVGFVSLGCPKALVDSERILTQLRMEGYEVVPTYEDADVVVVNTCGFIDSAKAESLEVIGEAIAENGKVIVTGCMGVEEHAIRDVHPSVLAVTGPQQYEQVVTAVHEVVPPKTEHNPLIDLVPPQGIKLTPRHYAYLKISEGCNHSCSFCIIPSMRGKLVSRPVGDVLSEAERLVKAGVKELLVISQDTSAYGVDLKYKTDFWNGQPVKTRMKELCEALGGMGVWVRLHYVYPYPNVDDVIPLMAAGKLLPYLDIPFQHASPKVLKAMKRPAFEDKTLARFKHWREICPELTIRSTFIVGFPGETEEDFQYLLDWLTEAQLDRVGCFQYSPVEGAPANELGLEPVPDEVKQDRWERFMAHQQAISAARLQLKVGKEIEVLIDEVDEQGAVGRSWADAPEIDGNVFVDSDALKPGDKVRVRITDADEYDLWAEPV.

Residues 6-116 (PKVGFVSLGC…VVTAVHEVVP (111 aa)) form the MTTase N-terminal domain. Cys-15, Cys-51, Cys-80, Cys-149, Cys-153, and Cys-156 together coordinate [4Fe-4S] cluster. A Radical SAM core domain is found at 135-373 (LTPRHYAYLK…MAHQQAISAA (239 aa)). The 65-residue stretch at 376–440 (QLKVGKEIEV…DEYDLWAEPV (65 aa)) folds into the TRAM domain.

The protein belongs to the methylthiotransferase family. RimO subfamily. [4Fe-4S] cluster is required as a cofactor.

Its subcellular location is the cytoplasm. The enzyme catalyses L-aspartate(89)-[ribosomal protein uS12]-hydrogen + (sulfur carrier)-SH + AH2 + 2 S-adenosyl-L-methionine = 3-methylsulfanyl-L-aspartate(89)-[ribosomal protein uS12]-hydrogen + (sulfur carrier)-H + 5'-deoxyadenosine + L-methionine + A + S-adenosyl-L-homocysteine + 2 H(+). Catalyzes the methylthiolation of an aspartic acid residue of ribosomal protein uS12. This is Ribosomal protein uS12 methylthiotransferase RimO from Pseudomonas paraeruginosa (strain DSM 24068 / PA7) (Pseudomonas aeruginosa (strain PA7)).